We begin with the raw amino-acid sequence, 659 residues long: Putative pentatricopeptide repeat-containing protein At3g16890, mitochondrial (659 aa).

A mitochondrion-targeting transit peptide spans 1 to 32; it reads MRGFASSASRIATAAAASKSLNASTSVNPKLS. PPR repeat units follow at residues 109 to 143, 144 to 178, 179 to 213, 214 to 248, 249 to 283, 284 to 318, 319 to 353, 354 to 388, 389 to 423, 424 to 458, 459 to 493, 494 to 528, 529 to 563, 564 to 598, and 599 to 633; these read DQSL…GYRI, SDEL…GMKP, STRL…GCKP, DRFT…GNRP, NVFT…KLNP, NEAT…DSNL, QRVG…GYIP, DSST…GVKP, GFNG…GLLS, SVYS…GISP, NLVT…GFKP, DVIT…GIEP, NEIT…GLSP, DLYA…GLKP, and DNFT…GCVP.

It belongs to the PPR family. P subfamily.

Its subcellular location is the mitochondrion. Its function is as follows. Required for the ubiquinol-cytochrome c oxidoreductase activity of mitochondrial complex III. The sequence is that of Putative pentatricopeptide repeat-containing protein At3g16890, mitochondrial (PPR40) from Arabidopsis thaliana (Mouse-ear cress).